A 348-amino-acid chain; its full sequence is Methylthioribose-1-phosphate isomerase (348 aa).

Substrate-binding positions include 53–55 (RGA), Arg93, and Gln197. Asp238 functions as the Proton donor in the catalytic mechanism. 248–249 (NK) serves as a coordination point for substrate.

The protein belongs to the eIF-2B alpha/beta/delta subunits family. MtnA subfamily.

It carries out the reaction 5-(methylsulfanyl)-alpha-D-ribose 1-phosphate = 5-(methylsulfanyl)-D-ribulose 1-phosphate. It participates in amino-acid biosynthesis; L-methionine biosynthesis via salvage pathway; L-methionine from S-methyl-5-thio-alpha-D-ribose 1-phosphate: step 1/6. Its function is as follows. Catalyzes the interconversion of methylthioribose-1-phosphate (MTR-1-P) into methylthioribulose-1-phosphate (MTRu-1-P). The polypeptide is Methylthioribose-1-phosphate isomerase (Gloeobacter violaceus (strain ATCC 29082 / PCC 7421)).